The following is a 354-amino-acid chain: MDKKIFMDYLPEELMEFGIQPKFRTKQLYQWVYRKYVDDFEEMKNIPKDLKAKLKKEFIINPLELINHEIATDGTEKFLFKMHDNHTVETVLIKMKDEEIKDGKIKEAKYTVCVSTQVGCKVGCAFCLTAKGGFVRNLSAGEIVAQVWWMKKFKNFDENKALNVVYMGMGEPLDNYDALVKAIKILANPDGMNISPRRQTVSTSGIAPKIKRLGNENLGVNLAISLHAVDDELREQLIPLNKAYNIESVIDAIREFPIDKRKKVMFEYLVIKDVNDDIESAKKLVKLLNGIPSKVNLIYFNPYPGTNFKRPDDATMKKFQDYLINKGIMCTIRKSKGMDISAACGQLREKEINK.

Glu89 (proton acceptor) is an active-site residue. In terms of domain architecture, Radical SAM core spans 106–339 (KEAKYTVCVS…CTIRKSKGMD (234 aa)). Cysteines 113 and 344 form a disulfide. Cys120, Cys124, and Cys127 together coordinate [4Fe-4S] cluster. Residues 170-171 (GE), Ser202, 225-227 (SLH), and Asn301 each bind S-adenosyl-L-methionine. Catalysis depends on Cys344, which acts as the S-methylcysteine intermediate.

The protein belongs to the radical SAM superfamily. RlmN family. The cofactor is [4Fe-4S] cluster.

It is found in the cytoplasm. It carries out the reaction adenosine(2503) in 23S rRNA + 2 reduced [2Fe-2S]-[ferredoxin] + 2 S-adenosyl-L-methionine = 2-methyladenosine(2503) in 23S rRNA + 5'-deoxyadenosine + L-methionine + 2 oxidized [2Fe-2S]-[ferredoxin] + S-adenosyl-L-homocysteine. The enzyme catalyses adenosine(37) in tRNA + 2 reduced [2Fe-2S]-[ferredoxin] + 2 S-adenosyl-L-methionine = 2-methyladenosine(37) in tRNA + 5'-deoxyadenosine + L-methionine + 2 oxidized [2Fe-2S]-[ferredoxin] + S-adenosyl-L-homocysteine. Its function is as follows. Specifically methylates position 2 of adenine 2503 in 23S rRNA and position 2 of adenine 37 in tRNAs. m2A2503 modification seems to play a crucial role in the proofreading step occurring at the peptidyl transferase center and thus would serve to optimize ribosomal fidelity. The sequence is that of Dual-specificity RNA methyltransferase RlmN from Nautilia profundicola (strain ATCC BAA-1463 / DSM 18972 / AmH).